A 525-amino-acid chain; its full sequence is MTANIHNHRILILDFGSQYTQLIARRIREIGVYCELWAWDVTEEQIREFNPNGIILSGGPESTTEDNSPRAPEYVFNAGVPVLGICYGMQTMSMQLGGDVEVSGEREFGYSQVEIRETCELFRDIQDSVSEDGKPLLDVWMSHGDKVTAIPADFVTIASTETCPFAIMANEEKRFYGVQFHPEVTHTHQGLAILKRFVLDICGCDALWTSAAIIEDTVARLKQQIGDDHVILALSGGVDSSVTALLLNRAIGKRLTCVFVDNGLLRLNEAEQVMAMFKGKFDLNIIHVEAEDRFLTALKGENDPEKKRKIIGHTFIEIFDEEAVKLPQVKWLAQGTIYPDVIESAASATGKAHVIKSHHNVGGLPEDMKLGLVEPLKELFKDEVRKIGLELGLPYDMLYRHPFPGPGLGVRVLGEIKKEYCDLLRRADAIFIEELHKADLYNKVSQAFTVFLPVRSVGVMGDGRKYDWVVSLRAVETVDFMTAHWAHLPYDFLGRVSNRIINEVNGISRVVYDISGKPPATIEWE.

Positions 9–207 (RILILDFGSQ…VLDICGCDAL (199 aa)) constitute a Glutamine amidotransferase type-1 domain. Cysteine 86 serves as the catalytic Nucleophile. Catalysis depends on residues histidine 181 and glutamate 183. In terms of domain architecture, GMPS ATP-PPase spans 208 to 400 (WTSAAIIEDT…LGLPYDMLYR (193 aa)). Position 235 to 241 (235 to 241 (SGGVDSS)) interacts with ATP.

Homodimer.

The catalysed reaction is XMP + L-glutamine + ATP + H2O = GMP + L-glutamate + AMP + diphosphate + 2 H(+). Its pathway is purine metabolism; GMP biosynthesis; GMP from XMP (L-Gln route): step 1/1. Its function is as follows. Catalyzes the synthesis of GMP from XMP. The polypeptide is GMP synthase [glutamine-hydrolyzing] (Proteus mirabilis (strain HI4320)).